The chain runs to 69 residues: Conopeptide Y-Pl1 (69 aa).

Positions 1–20 (MSKLGVVLFVFLLLLPLAAP) are cleaved as a signal peptide. Positions 21 to 69 (QPVGDQPADQPADRNAEARARFLHPFQYYTLYRYLTRFLHRYPIYYIRY) are excised as a propeptide.

Belongs to the conotoxin M superfamily. Conopeptide Y family. As to expression, expressed by the venom duct.

It localises to the secreted. In terms of biological role, tyrosine-rich conopeptide that targets several channels/receptors that are expressed in Xenopus oocytes. These targets are the voltage-gated potassium channels Kv1.6/KCNA6 (IC(50) is 170 nM) and Kv1.2/KCNA2 (IC(50) is 2.0 uM), Nav1.2/SCN2A (30% of inhibition), and N-methyl-D-aspartate (NMDA) receptor (GRIN1/GRIN2A/GRIN3B and GRIN1/GRIN2B/GRIN3B) (15% of inhibition). In vivo, causes the marine worm N.virens to move very slowly in contrast to control worms, and causes seizures (at 5 nmol) and death (20 nmol) to mice when intracranially injected. The chain is Conopeptide Y-Pl1 from Conus planorbis (Planorbis cone).